Reading from the N-terminus, the 450-residue chain is D-inositol 3-phosphate glycosyltransferase (450 aa).

Histidine 26 serves as a coordination point for 1D-myo-inositol 3-phosphate. Residues glutamine 32–proline 33 and glycine 40 contribute to the UDP-N-acetyl-alpha-D-glucosamine site. 1D-myo-inositol 3-phosphate contacts are provided by residues aspartate 37–asparagine 42, lysine 95, tyrosine 128, threonine 152, and arginine 172. Residues arginine 246, lysine 251, and glutamine 313 each contribute to the UDP-N-acetyl-alpha-D-glucosamine site. The Mg(2+) site is built by tyrosine 322, arginine 323, and alanine 325. UDP-N-acetyl-alpha-D-glucosamine-binding residues include glutamate 335 and glutamate 343. Threonine 349 lines the Mg(2+) pocket.

It belongs to the glycosyltransferase group 1 family. MshA subfamily. In terms of assembly, homodimer.

The enzyme catalyses 1D-myo-inositol 3-phosphate + UDP-N-acetyl-alpha-D-glucosamine = 1D-myo-inositol 2-acetamido-2-deoxy-alpha-D-glucopyranoside 3-phosphate + UDP + H(+). Its function is as follows. Catalyzes the transfer of a N-acetyl-glucosamine moiety to 1D-myo-inositol 3-phosphate to produce 1D-myo-inositol 2-acetamido-2-deoxy-glucopyranoside 3-phosphate in the mycothiol biosynthesis pathway. This Mycolicibacterium vanbaalenii (strain DSM 7251 / JCM 13017 / BCRC 16820 / KCTC 9966 / NRRL B-24157 / PYR-1) (Mycobacterium vanbaalenii) protein is D-inositol 3-phosphate glycosyltransferase.